The following is a 146-amino-acid chain: Kappa-casein (146 aa).

2 O-linked (GalNAc...) threonine glycosylation sites follow: threonine 107 and threonine 112. Residue serine 125 is modified to Phosphoserine; alternate. Serine 125 carries O-linked (GalNAc...) serine; alternate glycosylation. The O-linked (GalNAc...) threonine glycan is linked to threonine 142. Serine 143 bears the Phosphoserine mark.

This sequence belongs to the kappa-casein family. Mammary gland specific. Secreted in milk.

The protein resides in the secreted. In terms of biological role, kappa-casein stabilizes micelle formation, preventing casein precipitation in milk. This chain is Kappa-casein (CSN3), found in Tapirus indicus (Asiatic tapir).